A 430-amino-acid chain; its full sequence is Ribosomal protein uS12 methylthiotransferase RimO (430 aa).

Residues 2-118 (AKIFTISLGC…IDNVIKRPKH (117 aa)) form the MTTase N-terminal domain. [4Fe-4S] cluster contacts are provided by C11, C47, C81, C150, C154, and C157. A Radical SAM core domain is found at 136–368 (LTAPHSAYLK…AQSRVIDSIN (233 aa)). One can recognise a TRAM domain in the interval 369 to 430 (RKLKGKTVKV…KGYNRTGKII (62 aa)).

The protein belongs to the methylthiotransferase family. RimO subfamily. [4Fe-4S] cluster serves as cofactor.

It localises to the cytoplasm. The enzyme catalyses L-aspartate(89)-[ribosomal protein uS12]-hydrogen + (sulfur carrier)-SH + AH2 + 2 S-adenosyl-L-methionine = 3-methylsulfanyl-L-aspartate(89)-[ribosomal protein uS12]-hydrogen + (sulfur carrier)-H + 5'-deoxyadenosine + L-methionine + A + S-adenosyl-L-homocysteine + 2 H(+). Its function is as follows. Catalyzes the methylthiolation of an aspartic acid residue of ribosomal protein uS12. The chain is Ribosomal protein uS12 methylthiotransferase RimO from Elusimicrobium minutum (strain Pei191).